The chain runs to 287 residues: Bifunctional protein FolD (287 aa).

NADP(+) is bound by residues 165–167 (GRS), serine 190, and isoleucine 231.

This sequence belongs to the tetrahydrofolate dehydrogenase/cyclohydrolase family. In terms of assembly, homodimer.

The enzyme catalyses (6R)-5,10-methylene-5,6,7,8-tetrahydrofolate + NADP(+) = (6R)-5,10-methenyltetrahydrofolate + NADPH. The catalysed reaction is (6R)-5,10-methenyltetrahydrofolate + H2O = (6R)-10-formyltetrahydrofolate + H(+). Its pathway is one-carbon metabolism; tetrahydrofolate interconversion. Its function is as follows. Catalyzes the oxidation of 5,10-methylenetetrahydrofolate to 5,10-methenyltetrahydrofolate and then the hydrolysis of 5,10-methenyltetrahydrofolate to 10-formyltetrahydrofolate. The protein is Bifunctional protein FolD of Carboxydothermus hydrogenoformans (strain ATCC BAA-161 / DSM 6008 / Z-2901).